An 82-amino-acid polypeptide reads, in one-letter code: Small ribosomal subunit protein bS16 (82 aa).

Belongs to the bacterial ribosomal protein bS16 family.

This chain is Small ribosomal subunit protein bS16, found in Deinococcus deserti (strain DSM 17065 / CIP 109153 / LMG 22923 / VCD115).